Reading from the N-terminus, the 605-residue chain is Progranulin (605 aa).

The signal sequence occupies residues 1–17; it reads MWTLVGWTILVAGLVAG. 2 disulfide bridges follow: C126–C139 and C133–C149. A glycan (N-linked (GlcNAc...) asparagine) is linked at N197. Cystine bridges form between C297/C309, C303/C319, C310/C327, C320/C334, C328/C341, and C335/C348. Positions 359-386 are disordered; the sequence is QKTPAQPSRPSQPSPPGPPGPPSPPGPL. The segment covering 368–385 has biased composition (pro residues); the sequence is PSQPSPPGPPGPPSPPGP. 2 disulfide bridges follow: C392–C404 and C398–C414.

It belongs to the granulin family. In terms of assembly, progranulin is secreted as a homodimer. Interacts with SLPI; interaction protects progranulin from proteolysis. Interacts (via region corresponding to granulin-7 peptide) with CTSD; stabilizes CTSD and increases its proteolytic activity. Interacts (via region corresponding to granulin-7 peptide) with SORT1; this interaction mediates endocytosis and lysosome delivery of progranulin; interaction occurs at the neuronal cell surface in a stressed nervous system. Interacts with PSAP; facilitates lysosomal delivery of progranulin from the extracellular space and the biosynthetic pathway. Forms a complex with PSAP and M6PR; PSAP bridges the binding between progranulin and M6PR. Forms a complex with PSAP and SORT1; progranulin bridges the interaction between PSAP and SORT1; facilitates lysosomal targeting of PSAP via SORT1; interaction enhances PSAP uptake in primary cortical neurons. Interacts (via regions corresponding to granulin-2 and granulin-7 peptides) with GBA1; this interaction prevents aggregation of GBA1-SCARB2 complex via interaction with HSPA1A upon stress. Interacts (via region corresponding to granulin-7 peptide) with HSPA1A; mediates recruitment of HSPA1A to GBA1 and prevents GBA1 aggregation in response to stress. Post-translationally, cleaved by ELANE; proteolysis is blocked by SLPI and is concentration- and time-dependent and induces CXCL8/IL-8 production; granulin-3 and granulin-4 are resistant to ELANE. Cleaved by CTSL in lysosome thus regulating the maturation and turnover of progranulin within the lysosome.

It localises to the secreted. It is found in the lysosome. In terms of biological role, secreted protein that acts as a key regulator of lysosomal function and as a growth factor involved in inflammation, wound healing and cell proliferation. Regulates protein trafficking to lysosomes, and also the activity of lysosomal enzymes. Also facilitates the acidification of lysosomes, causing degradation of mature CTSD by CTSB. In addition, functions as a wound-related growth factor that acts directly on dermal fibroblasts and endothelial cells to promote division, migration and the formation of capillary-like tubule structures. Also promotes epithelial cell proliferation by blocking TNF-mediated neutrophil activation preventing release of oxidants and proteases. Moreover, modulates inflammation in neurons by preserving neurons survival, axonal outgrowth and neuronal integrity. Functionally, inhibits epithelial cell proliferation and induces epithelial cells to secrete IL-8. Its function is as follows. Stabilizes CTSD through interaction with CTSD leading to maintain its aspartic-type peptidase activity. In Cavia porcellus (Guinea pig), this protein is Progranulin (GRN).